We begin with the raw amino-acid sequence, 352 residues long: Nicotinate-nucleotide--dimethylbenzimidazole phosphoribosyltransferase (352 aa).

The Proton acceptor role is filled by E318.

The protein belongs to the CobT family.

The catalysed reaction is 5,6-dimethylbenzimidazole + nicotinate beta-D-ribonucleotide = alpha-ribazole 5'-phosphate + nicotinate + H(+). Its pathway is nucleoside biosynthesis; alpha-ribazole biosynthesis; alpha-ribazole from 5,6-dimethylbenzimidazole: step 1/2. Its function is as follows. Catalyzes the synthesis of alpha-ribazole-5'-phosphate from nicotinate mononucleotide (NAMN) and 5,6-dimethylbenzimidazole (DMB). This Geotalea uraniireducens (strain Rf4) (Geobacter uraniireducens) protein is Nicotinate-nucleotide--dimethylbenzimidazole phosphoribosyltransferase.